A 348-amino-acid polypeptide reads, in one-letter code: Nitrogenase vanadium-iron protein beta chain (348 aa).

[8Fe-7S] cluster contacts are provided by Cys-31, Cys-56, Cys-115, and Ser-153.

Belongs to the NifD/NifK/NifE/NifN family. Hexamer of two alpha, two beta, and two delta chains. [8Fe-7S] cluster serves as cofactor.

It catalyses the reaction N2 + 8 reduced [2Fe-2S]-[ferredoxin] + 16 ATP + 16 H2O = H2 + 8 oxidized [2Fe-2S]-[ferredoxin] + 2 NH4(+) + 16 ADP + 16 phosphate + 6 H(+). This vanadium-iron protein is part of the nitrogenase complex that catalyzes the key enzymatic reactions in nitrogen fixation. The chain is Nitrogenase vanadium-iron protein beta chain (vnfK) from Azorhizophilus paspali (Azotobacter paspali).